Consider the following 110-residue polypeptide: NADH-quinone oxidoreductase subunit K (110 aa).

Transmembrane regions (helical) follow at residues 14–34, 39–59, and 70–90; these read VSQYFILSFILLGIGLFGMMV, ITILMSLELALNSVNIAFVGI, and IFALFTIALAAAEAAVGLGII.

The protein belongs to the complex I subunit 4L family. In terms of assembly, NDH-1 is composed of 14 different subunits. Subunits NuoA, H, J, K, L, M, N constitute the membrane sector of the complex.

It localises to the cell inner membrane. The catalysed reaction is a quinone + NADH + 5 H(+)(in) = a quinol + NAD(+) + 4 H(+)(out). Functionally, NDH-1 shuttles electrons from NADH, via FMN and iron-sulfur (Fe-S) centers, to quinones in the respiratory chain. The immediate electron acceptor for the enzyme in this species is believed to be ubiquinone. Couples the redox reaction to proton translocation (for every two electrons transferred, four hydrogen ions are translocated across the cytoplasmic membrane), and thus conserves the redox energy in a proton gradient. This is NADH-quinone oxidoreductase subunit K from Hydrogenobaculum sp. (strain Y04AAS1).